A 389-amino-acid polypeptide reads, in one-letter code: Glutamate 5-kinase (389 aa).

Lysine 16 is an ATP binding site. Residues serine 56, aspartate 143, and asparagine 155 each coordinate substrate. Serine 175–aspartate 176 lines the ATP pocket. In terms of domain architecture, PUA spans alanine 281–proline 358.

Belongs to the glutamate 5-kinase family.

The protein localises to the cytoplasm. The catalysed reaction is L-glutamate + ATP = L-glutamyl 5-phosphate + ADP. Its pathway is amino-acid biosynthesis; L-proline biosynthesis; L-glutamate 5-semialdehyde from L-glutamate: step 1/2. In terms of biological role, catalyzes the transfer of a phosphate group to glutamate to form L-glutamate 5-phosphate. The protein is Glutamate 5-kinase of Rhizobium leguminosarum bv. trifolii (strain WSM2304).